The sequence spans 117 residues: UPF0295 protein Bsph_0336 (117 aa).

The next 2 helical transmembrane spans lie at 13–33 (SFAL…IFFK) and 37–57 (ILVL…TVVY).

This sequence belongs to the UPF0295 family.

It is found in the cell membrane. This is UPF0295 protein Bsph_0336 from Lysinibacillus sphaericus (strain C3-41).